A 127-amino-acid chain; its full sequence is uncharacterized protein (127 aa).

The tract at residues 69-94 (GDGGSVPEKGKHGILGAQGQEHPGLN) is disordered.

This is an uncharacterized protein from Homo sapiens (Human).